The chain runs to 550 residues: Chaperonin GroEL (550 aa).

ATP-binding positions include 30–33 (TLGP), Lys-51, 87–91 (DGTTT), Gly-415, and Asp-496.

It belongs to the chaperonin (HSP60) family. As to quaternary structure, forms a cylinder of 14 subunits composed of two heptameric rings stacked back-to-back. Interacts with the co-chaperonin GroES.

The protein resides in the cytoplasm. The enzyme catalyses ATP + H2O + a folded polypeptide = ADP + phosphate + an unfolded polypeptide.. Its function is as follows. Together with its co-chaperonin GroES, plays an essential role in assisting protein folding. The GroEL-GroES system forms a nano-cage that allows encapsulation of the non-native substrate proteins and provides a physical environment optimized to promote and accelerate protein folding. This is Chaperonin GroEL from Rickettsia bellii (strain OSU 85-389).